A 74-amino-acid polypeptide reads, in one-letter code: Chitinases 70, 30, and 20.5 kDa (74 aa).

Residues 1-27 (XTSATATYAKTQDWGSCFEGKWTIKNT) are N-terminus of 70 kDa chitinase. Residues 28-52 (AACSSYPSWVAGRSYAAGDIVYYTD) form an N-terminus of 30 kDa chitinase region. The N-terminus of 20.5 kDa chitinase stretch occupies residues 53–74 (XGYTDLPVSRQKMCQNGMVTNC).

It belongs to the glycosyl hydrolase 18 family. Chitinase class II subfamily. Homodimer, but homotrimers and homotetramers could be observed for the 20.5 and 30 kDa chitinases. In terms of processing, the 70 kDa chitinase is probably the precursor protein of the 30 and 20.5 kDa chitinases.

It catalyses the reaction Random endo-hydrolysis of N-acetyl-beta-D-glucosaminide (1-&gt;4)-beta-linkages in chitin and chitodextrins.. Its function is as follows. Able to cleave chitin oligomers from N=3 to 6. This Streptomyces olivaceoviridis (Streptomyces corchorusii) protein is Chitinases 70, 30, and 20.5 kDa.